The following is a 462-amino-acid chain: 3-isopropylmalate dehydratase large subunit (462 aa).

Residues cysteine 337, cysteine 397, and cysteine 400 each coordinate [4Fe-4S] cluster.

This sequence belongs to the aconitase/IPM isomerase family. LeuC type 1 subfamily. In terms of assembly, heterodimer of LeuC and LeuD. It depends on [4Fe-4S] cluster as a cofactor.

The catalysed reaction is (2R,3S)-3-isopropylmalate = (2S)-2-isopropylmalate. It participates in amino-acid biosynthesis; L-leucine biosynthesis; L-leucine from 3-methyl-2-oxobutanoate: step 2/4. Its function is as follows. Catalyzes the isomerization between 2-isopropylmalate and 3-isopropylmalate, via the formation of 2-isopropylmaleate. The chain is 3-isopropylmalate dehydratase large subunit from Listeria monocytogenes serovar 1/2a (strain ATCC BAA-679 / EGD-e).